The following is a 100-amino-acid chain: Urease subunit gamma (100 aa).

Belongs to the urease gamma subunit family. As to quaternary structure, heterotrimer of UreA (gamma), UreB (beta) and UreC (alpha) subunits. Three heterotrimers associate to form the active enzyme.

Its subcellular location is the cytoplasm. It catalyses the reaction urea + 2 H2O + H(+) = hydrogencarbonate + 2 NH4(+). The protein operates within nitrogen metabolism; urea degradation; CO(2) and NH(3) from urea (urease route): step 1/1. The sequence is that of Urease subunit gamma from Cupriavidus necator (strain ATCC 17699 / DSM 428 / KCTC 22496 / NCIMB 10442 / H16 / Stanier 337) (Ralstonia eutropha).